Here is a 313-residue protein sequence, read N- to C-terminus: Intelectin-like protein (313 aa).

Residues 33 to 251 enclose the Fibrinogen C-terminal domain; it reads TSCCSQTSPG…NNEKAPMALC (219 aa). 7 residues coordinate Ca(2+): His86, Glu87, Asn89, Gly92, Gly97, Asp98, and Asp133. 3 cysteine pairs are disulfide-bonded: Cys94–Cys280, Cys199–Cys259, and Cys251–Cys265. Ca(2+) is bound by residues Asn260, Glu262, Glu274, and Asp282. A carbohydrate is bound by residues 262–263 and Glu274; that span reads EH.

Monomer, homodimer, homotrimer and homotetramer. Mostly monomeric or dimeric.

It localises to the secreted. Functionally, binds mannan, mannose and, to a lesser degree, D-lactose, N-acetylgalactosamine, N-acetylglucosamine and beta-D-glucose. This chain is Intelectin-like protein, found in Alligator mississippiensis (American alligator).